Reading from the N-terminus, the 102-residue chain is Integration host factor subunit beta (102 aa).

The protein belongs to the bacterial histone-like protein family. Heterodimer of an alpha and a beta chain.

This protein is one of the two subunits of integration host factor, a specific DNA-binding protein that functions in genetic recombination as well as in transcriptional and translational control. The protein is Integration host factor subunit beta of Rhizobium rhizogenes (strain K84 / ATCC BAA-868) (Agrobacterium radiobacter).